We begin with the raw amino-acid sequence, 559 residues long: Nucleoprotein (559 aa).

Residues 53-235 are binding site for the cap structure m7GTP; it reads MRKEKRTDSD…ITQEQSQINI (183 aa). D378 and E380 together coordinate Mn(2+). Residues E388, C495, H498, and C519 each contribute to the Zn(2+) site. D523 contributes to the Mn(2+) binding site.

Belongs to the arenaviridae nucleocapsid protein family. Homomultimerizes to form the nucleocapsid. Binds to viral genomic RNA. Interacts with glycoprotein G2. Interacts with protein Z; this interaction probably directs the encapsidated genome to budding sites. Interacts with protein L; this interaction does not interfere with Z-L interaction. Interacts with host IKBKE (via Protein kinase domain); the interaction inhibits IKBKE kinase activity.

It is found in the virion. The protein localises to the host cytoplasm. Encapsidates the genome, protecting it from nucleases. The encapsidated genomic RNA is termed the nucleocapsid (NC). Serves as template for viral transcription and replication. The increased presence of protein N in host cell does not seem to trigger the switch from transcription to replication as observed in other negative strain RNA viruses. Through the interaction with host IKBKE, strongly inhibits the phosphorylation and nuclear translocation of host IRF3, a protein involved in interferon activation pathway, leading to the inhibition of interferon-beta and IRF3-dependent promoters activation. Also encodes a functional 3'-5' exoribonuclease that degrades preferentially dsRNA substrates and thereby participates in the suppression of interferon induction. This Sooretamys angouya (Paraguayan rice rat) protein is Nucleoprotein.